We begin with the raw amino-acid sequence, 178 residues long: Peptide deformylase (178 aa).

Residues Cys-102 and His-144 each contribute to the Fe cation site. Glu-145 is an active-site residue. Residue His-148 participates in Fe cation binding.

The protein belongs to the polypeptide deformylase family. Requires Fe(2+) as cofactor.

It carries out the reaction N-terminal N-formyl-L-methionyl-[peptide] + H2O = N-terminal L-methionyl-[peptide] + formate. In terms of biological role, removes the formyl group from the N-terminal Met of newly synthesized proteins. Requires at least a dipeptide for an efficient rate of reaction. N-terminal L-methionine is a prerequisite for activity but the enzyme has broad specificity at other positions. This Leptospira interrogans serogroup Icterohaemorrhagiae serovar copenhageni (strain Fiocruz L1-130) protein is Peptide deformylase.